A 150-amino-acid polypeptide reads, in one-letter code: Cyclin-dependent kinases regulatory subunit (150 aa).

Residues 115 to 137 are compositionally biased toward low complexity; the sequence is AAAQQQQQQQQQQQQQQQQHQTQ. The segment at 115–150 is disordered; sequence AAAQQQQQQQQQQQQQQQQHQTQSISNDMQVPPQIS.

This sequence belongs to the CKS family. As to quaternary structure, forms a stable but non-covalent complex with the CDC28 protein and with a cyclin.

Its function is as follows. Binds to the catalytic subunit of the cyclin dependent kinase (CDC28) and is essential for its biological function. In Saccharomyces cerevisiae (strain ATCC 204508 / S288c) (Baker's yeast), this protein is Cyclin-dependent kinases regulatory subunit.